A 216-amino-acid polypeptide reads, in one-letter code: Small ribosomal subunit protein uS3 (216 aa).

Residues isoleucine 24 to serine 93 enclose the KH type-2 domain.

This sequence belongs to the universal ribosomal protein uS3 family. In terms of assembly, part of the 30S ribosomal subunit.

Its function is as follows. Binds the lower part of the 30S subunit head. The protein is Small ribosomal subunit protein uS3 of Pyrobaculum calidifontis (strain DSM 21063 / JCM 11548 / VA1).